We begin with the raw amino-acid sequence, 153 residues long: Ribosome maturation factor RimP (153 aa).

Belongs to the RimP family.

It is found in the cytoplasm. Its function is as follows. Required for maturation of 30S ribosomal subunits. The sequence is that of Ribosome maturation factor RimP from Pelotomaculum thermopropionicum (strain DSM 13744 / JCM 10971 / SI).